The chain runs to 190 residues: Large ribosomal subunit protein eL15 (190 aa).

The protein belongs to the eukaryotic ribosomal protein eL15 family.

This is Large ribosomal subunit protein eL15 (rpl15e) from Nanoarchaeum equitans (strain Kin4-M).